We begin with the raw amino-acid sequence, 429 residues long: Glucose-6-phosphate isomerase (429 aa).

Glu-282 acts as the Proton donor in catalysis. Residues His-303 and Lys-418 contribute to the active site.

This sequence belongs to the GPI family.

It is found in the cytoplasm. It carries out the reaction alpha-D-glucose 6-phosphate = beta-D-fructose 6-phosphate. It functions in the pathway carbohydrate biosynthesis; gluconeogenesis. Its pathway is carbohydrate degradation; glycolysis; D-glyceraldehyde 3-phosphate and glycerone phosphate from D-glucose: step 2/4. Functionally, catalyzes the reversible isomerization of glucose-6-phosphate to fructose-6-phosphate. This chain is Glucose-6-phosphate isomerase, found in Mesomycoplasma hyopneumoniae (strain J / ATCC 25934 / NCTC 10110) (Mycoplasma hyopneumoniae).